Here is a 188-residue protein sequence, read N- to C-terminus: Putative lipoprotein LprB (188 aa).

The N-terminal stretch at 1–27 is a signal peptide; the sequence is MRCDVRALALAARGLIELMIVIPMVAG. The N-palmitoyl cysteine moiety is linked to residue cysteine 28. Residue cysteine 28 is the site of S-diacylglycerol cysteine attachment.

Its subcellular location is the cell membrane. This chain is Putative lipoprotein LprB (lprB), found in Mycobacterium leprae (strain TN).